Reading from the N-terminus, the 189-residue chain is MDESLADLRQELLALLCRDAYRAGDFTLSSGQKSQYYINCKPVTLSARGAYLVGRLFLEQLAPEAVAVAGLTLGADPLVVAVSVLSNLAGQDRAALIVRKEAKGHGTMSFIEGPPLPQGAVVTVLEDVITTGGSALKAVGRLQEAGYVVNEVLGIVDRQGGGAAAFAAQGIPLRSLFQISDLEAYLNRT.

Residues Arg99, Lys100, Lys103, His105, and 126-134 (EDVITTGGS) contribute to the 5-phospho-alpha-D-ribose 1-diphosphate site. Residues Thr130 and Arg158 each coordinate orotate.

It belongs to the purine/pyrimidine phosphoribosyltransferase family. PyrE subfamily. In terms of assembly, homodimer. Mg(2+) serves as cofactor.

It carries out the reaction orotidine 5'-phosphate + diphosphate = orotate + 5-phospho-alpha-D-ribose 1-diphosphate. Its pathway is pyrimidine metabolism; UMP biosynthesis via de novo pathway; UMP from orotate: step 1/2. Catalyzes the transfer of a ribosyl phosphate group from 5-phosphoribose 1-diphosphate to orotate, leading to the formation of orotidine monophosphate (OMP). The polypeptide is Orotate phosphoribosyltransferase (Thermosynechococcus vestitus (strain NIES-2133 / IAM M-273 / BP-1)).